Here is a 570-residue protein sequence, read N- to C-terminus: Arginine--tRNA ligase (570 aa).

The short motif at 127 to 137 (ANPTGPLHLGH) is the 'HIGH' region element.

Belongs to the class-I aminoacyl-tRNA synthetase family. As to quaternary structure, monomer.

The protein resides in the cytoplasm. The catalysed reaction is tRNA(Arg) + L-arginine + ATP = L-arginyl-tRNA(Arg) + AMP + diphosphate. The polypeptide is Arginine--tRNA ligase (Neorickettsia sennetsu (strain ATCC VR-367 / Miyayama) (Ehrlichia sennetsu)).